The following is a 628-amino-acid chain: Chaperone protein HtpG (628 aa).

Residues Met-1–Arg-333 form an a; substrate-binding region. The interval Glu-334–Arg-549 is b. The c stretch occupies residues Leu-550–Gly-628.

It belongs to the heat shock protein 90 family. In terms of assembly, homodimer.

Its subcellular location is the cytoplasm. In terms of biological role, molecular chaperone. Has ATPase activity. The chain is Chaperone protein HtpG from Mesorhizobium japonicum (strain LMG 29417 / CECT 9101 / MAFF 303099) (Mesorhizobium loti (strain MAFF 303099)).